Reading from the N-terminus, the 63-residue chain is MAKKLAITLTRSVIGRPEDQRITVRTLGLRKMHQTVVHNDNPAIRGMINKVAHLVKVKEIEEE.

It belongs to the universal ribosomal protein uL30 family. As to quaternary structure, part of the 50S ribosomal subunit.

This is Large ribosomal subunit protein uL30 from Geobacillus stearothermophilus (Bacillus stearothermophilus).